The sequence spans 162 residues: Regulator of sigma D (162 aa).

This sequence belongs to the Rsd/AlgQ family. As to quaternary structure, interacts with RpoD.

It localises to the cytoplasm. Its function is as follows. Binds RpoD and negatively regulates RpoD-mediated transcription activation by preventing the interaction between the primary sigma factor RpoD with the catalytic core of the RNA polymerase and with promoter DNA. May be involved in replacement of the RNA polymerase sigma subunit from RpoD to RpoS during the transition from exponential growth to the stationary phase. This chain is Regulator of sigma D, found in Salmonella choleraesuis (strain SC-B67).